A 2005-amino-acid chain; its full sequence is MARSVLVPPGPDSFRFFTRESLAAIEQRIAEEKAKRPKQERKDEDDENGPKPNSDLEAGKSLPFIYGDIPPEMVSEPLEDLDPYYINKKTFIVLNKGKAISRFSATSALYILTPFNPIRKLAIKILVHSLFNVLIMCTILTNCVFMTMSNPPDWTKNVEYTFTGIYTFESLIKILARGFCLEDFTFLRNPWNWLDFTVITFAYVTEFVNLGNVSALRTFRVLRALKTISVIPGLKTIVGALIQSVKKLSDVMILTVFCLSVFALIGLQLFMGNLRNKCLQWPPDNSTFEINITSFFNNSLDWNGTAFNRTVNMFNWDEYIEDKSHFYFLEGQNDALLCGNSSDAGQCPEGYICVKAGRNPNYGYTSFDTFSWAFLSLFRLMTQDFWENLYQLTLRAAGKTYMIFFVLVIFLGSFYLINLILAVVAMAYEEQNQATLEEAEQKEAEFQQMLEQLKKQQEEAQAAAAAASAESRDFSGAGGIGVFSESSSVASKLSSKSEKELKNRRKKKKQKEQAGEEEKEDAVRKSASEDSIRKKGFQFSLEGSRLTYEKRFSSPHQSLLSIRGSLFSPRRNSRASLFNFKGRVKDIGSENDFADDEHSTFEDNDSRRDSLFVPHRHGERRPSNVSQASRASRGIPTLPMNGKMHSAVDCNGVVSLVGGPSALTSPVGQLLPEGTTTETEIRKRRSSSYHVSMDLLEDPSRQRAMSMASILTNTMEELEESRQKCPPCWYKFANMCLIWDCCKPWLKVKHVVNLVVMDPFVDLAITICIVLNTLFMAMEHYPMTEQFSSVLSVGNLVFTGIFTAEMFLKIIAMDPYYYFQEGWNIFDGFIVSLSLMELGLANVEGLSVLRSFRLLRVFKLAKSWPTLNMLIKIIGNSVGALGNLTLVLAIIVFIFAVVGMQLFGKSYKECVCKISNDCELPRWHMHHFFHSFLIVFRVLCGEWIETMWDCMEVAGQTMCLTVFMMVMVIGNLVVLNLFLALLLSSFSSDNLAATDDDNEMNNLQIAVGRMQKGIDFVKRKIREFIQKAFVRKQKALDEIKPLEDLNNKKDSCISNHTTIEIGKDLNYLKDGNGTTSGIGSSVEKYVVDESDYMSFINNPSLTVTVPIALGESDFENLNTEEFSSESDMEESKEKLNATSSSEGSTVDIGAPAEGEQPEAEPEESLEPEACFTEDCVRKFKCCQISIEEGKGKLWWNLRKTCYKIVEHNWFETFIVFMILLSSGALAFEDIYIEQRKTIKTMLEYADKVFTYIFILEMLLKWVAYGFQMYFTNAWCWLDFLIVDVSLVSLTANALGYSELGAIKSLRTLRALRPLRALSRFEGMRVVVNALLGAIPSIMNVLLVCLIFWLIFSIMGVNLFAGKFYHCINYTTGEMFDVSVVNNYSECQALIESNQTARWKNVKVNFDNVGLGYLSLLQVATFKGWMDIMYAAVDSRNVELQPKYEDNLYMYLYFVIFIIFGSFFTLNLFIGVIIDNFNQQKKKFGGQDIFMTEEQKKYYNAMKKLGSKKPQKPIPRPANKFQGMVFDFVTKQVFDISIMILICLNMVTMMVETDDQSQEMTNILYWINLVFIVLFTGECVLKLISLRHYYFTIGWNIFDFVVVILSIVGMFLAELIEKYFVSPTLFRVIRLARIGRILRLIKGAKGIRTLLFALMMSLPALFNIGLLLFLVMFIYAIFGMSNFAYVKREVGIDDMFNFETFGNSMICLFQITTSAGWDGLLAPILNSGPPDCDPEKDHPGSSVKGDCGNPSVGIFFFVSYIIISFLVVVNMYIAVILENFSVATEESAEPLSEDDFEMFYEVWEKFDPDATQFIEFCKLSDFAAALDPPLLIAKPNKVQLIAMDLPMVSGDRIHCLDILFAFTKRVLGESGEMDALRIQMEERFMASNPSKVSYEPITTTLKRKQEEVSAIVIQRAYRRYLLKQKVKKVSSIYKKDKGKEDEGTPIKEDIITDKLNENSTPEKTDVTPSTTSPPSYDSVTKPEKEKFEKDKSEKEDKGKDIRESKK.

Residues 1-129 (MARSVLVPPG…KLAIKILVHS (129 aa)) are Cytoplasmic-facing. Ser-4 is subject to Phosphoserine. Residues 28 to 61 (RIAEEKAKRPKQERKDEDDENGPKPNSDLEAGKS) form a disordered region. Lys-38 participates in a covalent cross-link: Glycyl lysine isopeptide (Lys-Gly) (interchain with G-Cter in SUMO1). The I repeat unit spans residues 111–456 (ILTPFNPIRK…QQMLEQLKKQ (346 aa)). The chain crosses the membrane as a helical span at residues 130-148 (LFNVLIMCTILTNCVFMTM). At 149–155 (SNPPDWT) the chain is on the extracellular side. A helical membrane pass occupies residues 156–176 (KNVEYTFTGIYTFESLIKILA). Residues 177 to 190 (RGFCLEDFTFLRNP) are Cytoplasmic-facing. Residues 191 to 208 (WNWLDFTVITFAYVTEFV) form a helical membrane-spanning segment. Over 209-214 (NLGNVS) the chain is Extracellular. N-linked (GlcNAc...) asparagine glycosylation is present at Asn-212. The chain crosses the membrane as a helical span at residues 215–231 (ALRTFRVLRALKTISVI). The Cytoplasmic portion of the chain corresponds to 232–250 (PGLKTIVGALIQSVKKLSD). Residues 251 to 270 (VMILTVFCLSVFALIGLQLF) form a helical membrane-spanning segment. At 271–369 (MGNLRNKCLQ…PNYGYTSFDT (99 aa)) the chain is on the extracellular side. An intrachain disulfide couples Cys-278 to Cys-338. Residues Asn-285, Asn-291, Asn-297, Asn-303, Asn-308, and Asn-340 are each glycosylated (N-linked (GlcNAc...) asparagine). The pore-forming intramembrane region spans 370–394 (FSWAFLSLFRLMTQDFWENLYQLTL). Residues 395 to 401 (RAAGKTY) lie on the Extracellular side of the membrane. Residues 402–422 (MIFFVLVIFLGSFYLINLILA) traverse the membrane as a helical segment. Over 423–759 (VVAMAYEEQN…HVVNLVVMDP (337 aa)) the chain is Cytoplasmic. Phosphoserine is present on residues Ser-468, Ser-471, Ser-484, Ser-526, Ser-528, Ser-531, Ser-553, Ser-554, and Ser-558. The segment at 494-529 (SSKSEKELKNRRKKKKQKEQAGEEEKEDAVRKSASE) is disordered. Residues 511 to 529 (KEQAGEEEKEDAVRKSASE) are compositionally biased toward basic and acidic residues. Ser-554 carries the phosphoserine; by PKC; in vitro modification. A phosphoserine; by PKC; in vitro mark is found at Ser-573 and Ser-576. 6 positions are modified to phosphoserine: Ser-589, Ser-610, Ser-623, Ser-687, Ser-688, and Ser-721. The disordered stretch occupies residues 591–634 (NDFADDEHSTFEDNDSRRDSLFVPHRHGERRPSNVSQASRASRG). Basic and acidic residues predominate over residues 596 to 610 (DEHSTFEDNDSRRDS). The II repeat unit spans residues 741–1013 (CCKPWLKVKH…QIAVGRMQKG (273 aa)). The chain crosses the membrane as a helical span at residues 760 to 778 (FVDLAITICIVLNTLFMAM). Residues 779–789 (EHYPMTEQFSS) are Extracellular-facing. The chain crosses the membrane as a helical span at residues 790–809 (VLSVGNLVFTGIFTAEMFLK). Over 810–823 (IIAMDPYYYFQEGW) the chain is Cytoplasmic. Residues 824–843 (NIFDGFIVSLSLMELGLANV) traverse the membrane as a helical segment. Residues 844–845 (EG) lie on the Extracellular side of the membrane. A helical membrane pass occupies residues 846–863 (LSVLRSFRLLRVFKLAKS). The Cytoplasmic portion of the chain corresponds to 864–879 (WPTLNMLIKIIGNSVG). Residues 880–898 (ALGNLTLVLAIIVFIFAVV) traverse the membrane as a helical segment. Residues 899-927 (GMQLFGKSYKECVCKISNDCELPRWHMHH) lie on the Extracellular side of the membrane. A disulfide bridge connects residues Cys-912 and Cys-918. A binds SCN2B region spans residues 917–918 (DC). An intramembrane region (pore-forming) is located at residues 928-948 (FFHSFLIVFRVLCGEWIETMW). Residues 949–961 (DCMEVAGQTMCLT) are Extracellular-facing. Cys-950 and Cys-959 are oxidised to a cystine. A helical transmembrane segment spans residues 962-982 (VFMMVMVIGNLVVLNLFLALL). At 983–1209 (LSSFSSDNLA…TCYKIVEHNW (227 aa)) the chain is on the cytoplasmic side. Residues 1120-1166 (EEFSSESDMEESKEKLNATSSSEGSTVDIGAPAEGEQPEAEPEESLE) form a disordered region. Residues 1155–1166 (EQPEAEPEESLE) show a composition bias toward acidic residues. The stretch at 1190–1504 (KGKLWWNLRK…KKYYNAMKKL (315 aa)) is one III repeat. A helical transmembrane segment spans residues 1210-1227 (FETFIVFMILLSSGALAF). The Extracellular portion of the chain corresponds to 1228 to 1240 (EDIYIEQRKTIKT). Residues 1241–1259 (MLEYADKVFTYIFILEMLL) traverse the membrane as a helical segment. At 1260 to 1273 (KWVAYGFQMYFTNA) the chain is on the cytoplasmic side. The chain crosses the membrane as a helical span at residues 1274 to 1292 (WCWLDFLIVDVSLVSLTAN). At 1293–1300 (ALGYSELG) the chain is on the extracellular side. A helical membrane pass occupies residues 1301 to 1319 (AIKSLRTLRALRPLRALSR). The Cytoplasmic segment spans residues 1320–1336 (FEGMRVVVNALLGAIPS). The helical transmembrane segment at 1337–1356 (IMNVLLVCLIFWLIFSIMGV) threads the bilayer. Topologically, residues 1357–1408 (NLFAGKFYHCINYTTGEMFDVSVVNNYSECQALIESNQTARWKNVKVNFDNV) are extracellular. A disulfide bridge connects residues Cys-1366 and Cys-1386. 3 N-linked (GlcNAc...) asparagine glycosylation sites follow: Asn-1368, Asn-1382, and Asn-1393. The segment at residues 1409–1430 (GLGYLSLLQVATFKGWMDIMYA) is an intramembrane region (pore-forming). Residues 1431-1447 (AVDSRNVELQPKYEDNL) are Extracellular-facing. A helical membrane pass occupies residues 1448–1469 (YMYLYFVIFIIFGSFFTLNLFI). Residues 1470–1532 (GVIIDNFNQQ…MVFDFVTKQV (63 aa)) lie on the Cytoplasmic side of the membrane. A Phosphoserine; by PKC modification is found at Ser-1506. An IV repeat occupies 1513–1811 (IPRPANKFQG…WEKFDPDATQ (299 aa)). A helical membrane pass occupies residues 1533–1550 (FDISIMILICLNMVTMMV). The Extracellular portion of the chain corresponds to 1551 to 1561 (ETDDQSQEMTN). Residues 1562–1580 (ILYWINLVFIVLFTGECVL) form a helical membrane-spanning segment. Over 1581–1592 (KLISLRHYYFTI) the chain is Cytoplasmic. Residues 1593–1610 (GWNIFDFVVVILSIVGMF) traverse the membrane as a helical segment. The Extracellular segment spans residues 1611 to 1623 (LAELIEKYFVSPT). The chain crosses the membrane as a helical span at residues 1624–1640 (LFRVIRLARIGRILRLI). Residues 1641-1659 (KGAKGIRTLLFALMMSLPA) lie on the Cytoplasmic side of the membrane. Residues 1660–1677 (LFNIGLLLFLVMFIYAIF) form a helical membrane-spanning segment. Residues 1678–1699 (GMSNFAYVKREVGIDDMFNFET) lie on the Extracellular side of the membrane. The segment at residues 1700–1722 (FGNSMICLFQITTSAGWDGLLAP) is an intramembrane region (pore-forming). The Extracellular portion of the chain corresponds to 1723-1752 (ILNSGPPDCDPEKDHPGSSVKGDCGNPSVG). Cys-1731 and Cys-1746 are oxidised to a cystine. The helical transmembrane segment at 1753-1775 (IFFFVSYIIISFLVVVNMYIAVI) threads the bilayer. Residues 1776–2005 (LENFSVATEE…KGKDIRESKK (230 aa)) are Cytoplasmic-facing. The region spanning 1905-1934 (EEVSAIVIQRAYRRYLLKQKVKKVSSIYKK) is the IQ domain. The residue at position 1930 (Ser-1930) is a Phosphoserine. Residues 1933-1964 (KKDKGKEDEGTPIKEDIITDKLNENSTPEKTD) show a composition bias toward basic and acidic residues. Residues 1933–2005 (KKDKGKEDEG…KGKDIRESKK (73 aa)) form a disordered region. Phosphothreonine occurs at positions 1943, 1963, and 1966. Residue Ser-1971 is modified to Phosphoserine. Positions 1979 to 2005 (TKPEKEKFEKDKSEKEDKGKDIRESKK) are enriched in basic and acidic residues.

This sequence belongs to the sodium channel (TC 1.A.1.10) family. Nav1.2/SCN2A subfamily. In terms of assembly, heterooligomer of a large alpha subunit and a smaller beta subunit. Heterooligomer with SCN2B or SCN4B; disulfide-linked. Heterooligomer with SCN1B or SCN3B; non-covalently linked. Interacts with NEDD4L. Interacts with CALM. Interacts with TMEM233. Interacts with the conotoxin GVIIJ. Interacts with the scorpion toxin BMK M1. Post-translationally, may be ubiquitinated by NEDD4L; which would promote its endocytosis. Phosphorylation at Ser-1506 by PKC in a highly conserved cytoplasmic loop slows inactivation of the sodium channel and reduces peak sodium currents. In terms of processing, sumoylated at Lys-38. Sumoylation is induced by hypoxia, increases voltage-gated sodium current and mediates the early response to acute hypoxia in neurons. Sumoylated SCN2A is located at the cell membrane. In terms of tissue distribution, expressed in brain (at protein level). Expressed in cerebellar granule neurons (at protein level).

It is found in the cell membrane. The enzyme catalyses Na(+)(in) = Na(+)(out). Functionally, mediates the voltage-dependent sodium ion permeability of excitable membranes. Assuming opened or closed conformations in response to the voltage difference across the membrane, the protein forms a sodium-selective channel through which Na(+) ions may pass in accordance with their electrochemical gradient. Implicated in the regulation of hippocampal replay occurring within sharp wave ripples (SPW-R) important for memory. The protein is Sodium channel protein type 2 subunit alpha of Rattus norvegicus (Rat).